The following is a 446-amino-acid chain: Zinc finger protein BALDIBIS (446 aa).

Residues 20-53 are disordered; that stretch reads EHIAPNPNPNPNPTSSNSAKRKRNLPGNPDPDAE. Ser58 carries the phosphoserine modification. 2 consecutive C2H2-type zinc fingers follow at residues 68 to 90 and 110 to 140; these read FICEVCNKGFKRDQNLQLHRRGH and YICPEKTCVHHDPARALGDLTGIKKHFSRKH. The short motif at 132 to 139 is the Nuclear localization signal element; sequence IKKHFSRK. A C2H2-type 2; degenerate zinc finger spans residues 145–168; sequence WKCDKCSKKYAVMSDWKAHSKICG. Residues Cys147, Cys150, His163, Cys167, Cys174, Cys176, His189, and Cys193 each contribute to the Zn(2+) site. The segment at 172–195 adopts a CCHC-type 2; atypical zinc-finger fold; sequence YRCDCGTLFSRKDSFITHRAFCDA. The tract at residues 182–194 is SHR-binding; sequence RKDSFITHRAFCD. A disordered region spans residues 425 to 446; the sequence is HNLPDSSPPASTDGTPTADMNQ. The segment covering 427 to 446 has biased composition (polar residues); it reads LPDSSPPASTDGTPTADMNQ.

In terms of assembly, binds to RGA and SCL3 competitively in the nucleus. In terms of tissue distribution, expressed in roots, especially in vascular initials, cortex, endodermis, and quiescent center (QC).

The protein resides in the nucleus. Functionally, transcription factor that, together with JKD, regulates tissue boundaries and asymmetric cell division in roots by a rapid up-regulation of 'SCARECROW' (SCR), thus controlling the nuclear localization of 'SHORT-ROOT' (SHR) and restricting its action. Confines CYCD6 expression to the cortex-endodermis initial/daughter (CEI/CEID) tissues. Binds DNA via its zinc fingers. Recognizes and binds to SCL3 promoter sequence 5'-AGACAA-3' to promote its expression when in complex with RGA. The sequence is that of Zinc finger protein BALDIBIS from Arabidopsis thaliana (Mouse-ear cress).